A 205-amino-acid polypeptide reads, in one-letter code: Molybdenum cofactor guanylyltransferase (205 aa).

GTP is bound by residues 14–16 (LAG), K27, D77, and D107. D107 contributes to the Mg(2+) binding site.

It belongs to the MobA family. Monomer. Mg(2+) is required as a cofactor.

It localises to the cytoplasm. It carries out the reaction Mo-molybdopterin + GTP + H(+) = Mo-molybdopterin guanine dinucleotide + diphosphate. In terms of biological role, transfers a GMP moiety from GTP to Mo-molybdopterin (Mo-MPT) cofactor (Moco or molybdenum cofactor) to form Mo-molybdopterin guanine dinucleotide (Mo-MGD) cofactor. This chain is Molybdenum cofactor guanylyltransferase, found in Burkholderia orbicola (strain MC0-3).